The primary structure comprises 165 residues: 6,7-dimethyl-8-ribityllumazine synthase (165 aa).

5-amino-6-(D-ribitylamino)uracil is bound by residues tyrosine 30, alanine 61–glutamate 63, and valine 90–isoleucine 92. Glutamate 95–threonine 96 is a (2S)-2-hydroxy-3-oxobutyl phosphate binding site. Histidine 98 functions as the Proton donor in the catalytic mechanism. Asparagine 123 lines the 5-amino-6-(D-ribitylamino)uracil pocket. Arginine 137 is a (2S)-2-hydroxy-3-oxobutyl phosphate binding site.

The protein belongs to the DMRL synthase family.

The catalysed reaction is (2S)-2-hydroxy-3-oxobutyl phosphate + 5-amino-6-(D-ribitylamino)uracil = 6,7-dimethyl-8-(1-D-ribityl)lumazine + phosphate + 2 H2O + H(+). The protein operates within cofactor biosynthesis; riboflavin biosynthesis; riboflavin from 2-hydroxy-3-oxobutyl phosphate and 5-amino-6-(D-ribitylamino)uracil: step 1/2. Functionally, catalyzes the formation of 6,7-dimethyl-8-ribityllumazine by condensation of 5-amino-6-(D-ribitylamino)uracil with 3,4-dihydroxy-2-butanone 4-phosphate. This is the penultimate step in the biosynthesis of riboflavin. This is 6,7-dimethyl-8-ribityllumazine synthase from Xanthobacter autotrophicus (strain ATCC BAA-1158 / Py2).